The sequence spans 701 residues: Elongation factor G (701 aa).

Residues 8–290 (KHYRNIGISA…AVIEYLPAPI (283 aa)) form the tr-type G domain. GTP is bound by residues 17–24 (AHIDAGKT), 88–92 (DTPGH), and 142–145 (NKMD).

Belongs to the TRAFAC class translation factor GTPase superfamily. Classic translation factor GTPase family. EF-G/EF-2 subfamily.

The protein resides in the cytoplasm. In terms of biological role, catalyzes the GTP-dependent ribosomal translocation step during translation elongation. During this step, the ribosome changes from the pre-translocational (PRE) to the post-translocational (POST) state as the newly formed A-site-bound peptidyl-tRNA and P-site-bound deacylated tRNA move to the P and E sites, respectively. Catalyzes the coordinated movement of the two tRNA molecules, the mRNA and conformational changes in the ribosome. The chain is Elongation factor G from Hamiltonella defensa subsp. Acyrthosiphon pisum (strain 5AT).